The sequence spans 340 residues: Uroporphyrinogen decarboxylase (340 aa).

Residues 21 to 25 (RQAGR), Asp-71, Tyr-148, Ser-203, and His-316 contribute to the substrate site.

Belongs to the uroporphyrinogen decarboxylase family. As to quaternary structure, homodimer.

It is found in the cytoplasm. It catalyses the reaction uroporphyrinogen III + 4 H(+) = coproporphyrinogen III + 4 CO2. The protein operates within porphyrin-containing compound metabolism; protoporphyrin-IX biosynthesis; coproporphyrinogen-III from 5-aminolevulinate: step 4/4. Functionally, catalyzes the decarboxylation of four acetate groups of uroporphyrinogen-III to yield coproporphyrinogen-III. The protein is Uroporphyrinogen decarboxylase of Campylobacter hominis (strain ATCC BAA-381 / DSM 21671 / CCUG 45161 / LMG 19568 / NCTC 13146 / CH001A).